Consider the following 202-residue polypeptide: Regulator of G-protein signaling 16 (202 aa).

S-palmitoyl cysteine attachment occurs at residues Cys2 and Cys12. The RGS domain occupies 65–181; the sequence is SFDLLLSSKN…LKSPAYRDLA (117 aa). Residue Tyr168 is modified to Phosphotyrosine; by EGFR. Tyr177 bears the Phosphotyrosine mark. The segment at 183–202 is disordered; the sequence is QATAASASPSSSSPAEPLHT.

In terms of assembly, interacts with GNAI1 and GNAQ. Interacts with GNAI3, GNAI3 and GNAO1. Palmitoylated on Cys-2 and/or Cys-12. Post-translationally, phosphorylated. Phosphorylation at Tyr-168 by EGFR enhances GTPase accelerating (GAP) activity toward GNAI1.

The protein resides in the membrane. Its function is as follows. Regulates G protein-coupled receptor signaling cascades. Inhibits signal transduction by increasing the GTPase activity of G protein alpha subunits, thereby driving them into their inactive GDP-bound form. Plays an important role in the phototransduction cascade by regulating the lifetime and effective concentration of activated transducin alpha. May regulate extra and intracellular mitogenic signals. The protein is Regulator of G-protein signaling 16 (RGS16) of Bos taurus (Bovine).